A 353-amino-acid polypeptide reads, in one-letter code: Mitochondrial import inner membrane translocase subunit TIM50 (353 aa).

Residues 1–21 (MAASAALFSRLRSGLRVGARG) constitute a mitochondrion transit peptide. Over 22–65 (LCTRLAPPPPRTPEQVTEIANRGGSKAQGPQHQPGSEGPSYAKK) the chain is Mitochondrial matrix. A disordered region spans residues 24-59 (TRLAPPPPRTPEQVTEIANRGGSKAQGPQHQPGSEG). The chain crosses the membrane as a helical span at residues 66–86 (IALWIAGLLGAGGTVSIVYIF). The Mitochondrial intermembrane portion of the chain corresponds to 87–353 (GNNPVDENGT…SRLWPRSKQP (267 aa)). Positions 143–286 (YYQPPYTLVL…LDLSAFLKTI (144 aa)) constitute an FCP1 homology domain. Serine 341 is subject to Phosphoserine.

This sequence belongs to the TIM50 family. In terms of assembly, component of the TIM23 complex at least composed of TIMM23, TIMM17 (TIMM17A or TIMM17B) and TIMM50; within this complex, directly interacts with TIMM23. The complex interacts with the TIMM44 component of the PAM complex and with DNAJC15.

The protein localises to the mitochondrion inner membrane. Its function is as follows. Essential component of the TIM23 complex, a complex that mediates the translocation of transit peptide-containing proteins across the mitochondrial inner membrane. Has some phosphatase activity in vitro; however such activity may not be relevant in vivo. The chain is Mitochondrial import inner membrane translocase subunit TIM50 (Timm50) from Mus musculus (Mouse).